Here is a 302-residue protein sequence, read N- to C-terminus: Nitrophorin Cim l NP (302 aa).

The signal sequence occupies residues 1–20; that stretch reads MKLLLSAGAALAFVLGLCAA. Cys-80 contributes to the heme binding site.

Requires heme b as cofactor. Post-translationally, the N-terminus is blocked. In terms of tissue distribution, expressed in salivary glands.

It localises to the secreted. Functionally, heme-based protein that delivers nitric oxide gas (NO) to the victim while feeding, resulting in vasodilation. In place of heme, the heme-binding cysteine can also reversibly bind NO when it is present in high concentrations. The protein is Nitrophorin Cim l NP of Cimex lectularius (Bed bug).